Reading from the N-terminus, the 262-residue chain is Transcription factor Spi-B (262 aa).

The tract at residues 1–31 (MLALEAAQLDGPHFSCLYPDGVFYDLDSCKH) is TAD1 (Acidic). Positions 41–61 (PDSLWDWTVAPPVPATPYEAF) are TAD2. Positions 140–163 (ALEVSDSESDEALVAGPEGKGSEA) are disordered. A DNA-binding region (ETS) is located at residues 169–252 (LRLYQFLLGL…VKRKLTYQFD (84 aa)).

This sequence belongs to the ETS family. Can form homotypic interactions. Interacts with IRF4/Pip. Interacts with JUN. Interacts with TBP. May also interact with CREBBP and EP300. Interacts with NONO/p54(nrb). In terms of tissue distribution, expressed in plasmacytoid dendritic cells (pDCs) and B-cells, not expressed in T-cells or granulocytes. May also be enriched in stem cell populations of the liver.

It localises to the nucleus. It is found in the cytoplasm. Functionally, sequence specific transcriptional activator which binds to the PU-box, a purine-rich DNA sequence (5'-GAGGAA-3') that can act as a lymphoid-specific enhancer. Promotes development of plasmacytoid dendritic cells (pDCs), also known as type 2 DC precursors (pre-DC2) or natural interferon (IFN)-producing cells. These cells have the capacity to produce large amounts of interferon and block viral replication. May be required for B-cell receptor (BCR) signaling, which is necessary for normal B-cell development and antigenic stimulation. The sequence is that of Transcription factor Spi-B (SPIB) from Homo sapiens (Human).